We begin with the raw amino-acid sequence, 198 residues long: (S)-2-hydroxypropylphosphonic acid epoxidase (198 aa).

The HTH cro/C1-type domain maps to Leu15–Leu70. Lys23 is a binding site for substrate. The segment at residues His26 to Asn45 is a DNA-binding region (H-T-H motif). Residues Arg97, Tyr105, Asn135–His138, and Glu142 contribute to the substrate site. Residues Ser136 to Val196 form the Cupin type-2 domain. Fe cation contacts are provided by His138, Glu142, and His180.

This sequence belongs to the non-heme iron-dependent dioxygenase family. Homotetramer. It depends on Fe(2+) as a cofactor.

It carries out the reaction (S)-2-hydroxypropylphosphonate + H2O2 = (1R,2S)-epoxypropylphosphonate + 2 H2O. It functions in the pathway antibiotic biosynthesis; fosfomycin biosynthesis. In terms of biological role, non-heme-dependent dioxygenase that catalyzes the oxidative epoxidation of (S)-2-hydroxypropylphosphonate into (1R,2S)-epoxypropylphosphonate, the final step in the biosynthesis of fosfomycin antibiotic. The chain is (S)-2-hydroxypropylphosphonic acid epoxidase (hppE) from Streptomyces wedmorensis.